We begin with the raw amino-acid sequence, 271 residues long: NADPH-dependent 7-cyano-7-deazaguanine reductase (271 aa).

Residue 81–83 participates in substrate binding; it reads IES. 83 to 84 is a binding site for NADPH; sequence SK. Catalysis depends on cysteine 177, which acts as the Thioimide intermediate. The active-site Proton donor is aspartate 184. Position 216-217 (216-217) interacts with substrate; sequence HE. An NADPH-binding site is contributed by 245–246; that stretch reads RG.

Belongs to the GTP cyclohydrolase I family. QueF type 2 subfamily. Homodimer.

It is found in the cytoplasm. It carries out the reaction 7-aminomethyl-7-carbaguanine + 2 NADP(+) = 7-cyano-7-deazaguanine + 2 NADPH + 3 H(+). Its pathway is tRNA modification; tRNA-queuosine biosynthesis. Catalyzes the NADPH-dependent reduction of 7-cyano-7-deazaguanine (preQ0) to 7-aminomethyl-7-deazaguanine (preQ1). This is NADPH-dependent 7-cyano-7-deazaguanine reductase from Xanthomonas campestris pv. campestris (strain 8004).